The following is a 128-amino-acid chain: UPF0212 protein TGAM_1344 (128 aa).

This sequence belongs to the UPF0212 family.

This Thermococcus gammatolerans (strain DSM 15229 / JCM 11827 / EJ3) protein is UPF0212 protein TGAM_1344.